The chain runs to 874 residues: Alanine--tRNA ligase (874 aa).

Residues histidine 564, histidine 568, cysteine 665, and histidine 669 each coordinate Zn(2+).

This sequence belongs to the class-II aminoacyl-tRNA synthetase family. Zn(2+) is required as a cofactor.

It is found in the cytoplasm. The catalysed reaction is tRNA(Ala) + L-alanine + ATP = L-alanyl-tRNA(Ala) + AMP + diphosphate. Functionally, catalyzes the attachment of alanine to tRNA(Ala) in a two-step reaction: alanine is first activated by ATP to form Ala-AMP and then transferred to the acceptor end of tRNA(Ala). Also edits incorrectly charged Ser-tRNA(Ala) and Gly-tRNA(Ala) via its editing domain. In Polaromonas naphthalenivorans (strain CJ2), this protein is Alanine--tRNA ligase.